Consider the following 193-residue polypeptide: Adenine phosphoribosyltransferase (193 aa).

The protein belongs to the purine/pyrimidine phosphoribosyltransferase family. In terms of assembly, homodimer.

Its subcellular location is the cytoplasm. It catalyses the reaction AMP + diphosphate = 5-phospho-alpha-D-ribose 1-diphosphate + adenine. The protein operates within purine metabolism; AMP biosynthesis via salvage pathway; AMP from adenine: step 1/1. In terms of biological role, catalyzes a salvage reaction resulting in the formation of AMP, that is energically less costly than de novo synthesis. The sequence is that of Adenine phosphoribosyltransferase from Bifidobacterium adolescentis (strain ATCC 15703 / DSM 20083 / NCTC 11814 / E194a).